A 957-amino-acid chain; its full sequence is Calsyntenin-3 (957 aa).

The N-terminal stretch at 1 to 19 (MTLLLVSLLLASLLQISSG) is a signal peptide. At 1 to 21 (MTLLLVSLLLASLLQISSGNK) the chain is on the cytoplasmic side. The Extracellular portion of the chain corresponds to 20-848 (NKANKHKPWI…SHRNSMVPSA (829 aa)). Positions 22 to 42 (ANKHKPWIEAEYQGIVMENDN) form an intramembrane region, helical. Cadherin domains are found at residues 29-145 (IEAE…APVF) and 146-246 (VERL…KPSW). Over 43–73 (TVLLNPPLFALDKDAPLRYAGEICGFRLHGS) the chain is Cytoplasmic. Positions 74-94 (GVPFKAVILDKATGEGLIRAK) form an intramembrane region, helical. Residues 95–139 (EPVDCEAQKEHTFTTQAYDCVDGPDGANTKKSHKATVHVRVNDVN) lie on the Cytoplasmic side of the membrane. The helical intramembrane region spans 140 to 160 (EFAPVFVERLYRAAVTEGKLY). Residues 161-248 (DRILRVEAID…KPTCKPSWQG (88 aa)) lie on the Cytoplasmic side of the membrane. Residues 249–269 (WNKRIEYAPGAGSLALFPGIR) form a helical membrane-spanning segment. Residues 270-357 (LETCDEPLWN…GTQAVQVPLG (88 aa)) are Lumenal-facing. N-linked (GlcNAc...) asparagine glycans are attached at residues asparagine 299, asparagine 327, asparagine 347, asparagine 508, and asparagine 741. A helical transmembrane segment spans residues 849-869 (ATLIIVVCVGFLVLMVILGLV). Over 870–957 (RIHSLHRRVS…RIIESPPHRY (88 aa)) the chain is Cytoplasmic. Residues 916–957 (QQTGVAGVAGGQQEEEDSSDSEAADSPSSDERRIIESPPHRY) are disordered. The span at 928 to 938 (QEEEDSSDSEA) shows a compositional bias: acidic residues. The segment covering 944 to 957 (SDERRIIESPPHRY) has biased composition (basic and acidic residues).

The protein belongs to the calsyntenin family. Interacts (via cadherin domains) with both alpha and beta isoforms of neurexins (NRXN1, NRXN2 and NRXN3). Directly interacts with APBA2. Forms a tripartite complex with APBA2 and APP. Interacts with low affinity with KLC1. Interacts with SLC23A2/SVCT2. As to quaternary structure, interacts with CIDEA; inhibiting the lipid transferase activity of CIDEA. Interacts with CIDEC; inhibiting the lipid transferase activity of CIDEC. Proteolytically processed under normal cellular conditions. A primary zeta-cleavage generates a large extracellular (soluble) N-terminal domain (sAlc) and a short C-terminal transmembrane fragment (CTF1). A secondary cleavage catalyzed by gamma-secretase within the transmembrane domain releases the beta-Alc-beta chain in the extracellular milieu and produces an intracellular fragment (AlcICD). This processing is strongly suppressed in the tripartite complex formed with APBA2 and APP, which seems to prevent the association with gamma-secretase. Post-translationally, ubiquitinated: endoplasmic reticulum-localized protein is ubiquitinated and degraded by the endoplasmic reticulum-associated degradation (ERAD) pathway.

It is found in the postsynaptic cell membrane. It localises to the endoplasmic reticulum membrane. Its subcellular location is the golgi apparatus membrane. The protein resides in the cell projection. The protein localises to the dendrite. It is found in the lipid droplet. Postsynaptic adhesion molecule that binds to presynaptic neurexins to mediate both excitatory and inhibitory synapse formation. Promotes synapse development by acting as a cell adhesion molecule at the postsynaptic membrane, which associates with both neurexin-alpha and neurexin-beta proteins at the presynaptic membrane. Regulates the balance between excitatory and inhibitory synapses by inhibiting formation of excitatory parallel-fiber synapses and promoting formation of inhibitory synapses in the same neuron. May also be involved in ascorbate (vitamin C) uptake via its interaction with SLC23A2/SVCT2. Complex formation with APBA2 and APP, stabilizes APP metabolism and enhances APBA2-mediated suppression of beta-APP40 secretion, due to the retardation of intracellular APP maturation. In terms of biological role, adipose-specific isoform that plays a key role in adaptive thermogenesis. Facilitates the efficient use of stored triglyceride by promoting multilocular morphology of thermogenic adipocytes: acts by inhibiting the activity of CIDEA and CIDEC on lipid droplets, thereby preventing lipid droplet fusion and facilitating lipid utilization. May also participate in adaptive thermogenesis by promoting sympathetic innervation of thermogenic adipose tissue: acts by driving secretion of neurotrophic factor S100B from brown adipocytes, stimulating neurite outgrowth from sympathetic neurons. The polypeptide is Calsyntenin-3 (Rattus norvegicus (Rat)).